The chain runs to 394 residues: Phosphopentomutase (394 aa).

Mn(2+) is bound by residues aspartate 13, aspartate 286, histidine 291, aspartate 327, histidine 328, and histidine 339.

The protein belongs to the phosphopentomutase family. Requires Mn(2+) as cofactor.

Its subcellular location is the cytoplasm. The enzyme catalyses 2-deoxy-alpha-D-ribose 1-phosphate = 2-deoxy-D-ribose 5-phosphate. It carries out the reaction alpha-D-ribose 1-phosphate = D-ribose 5-phosphate. The protein operates within carbohydrate degradation; 2-deoxy-D-ribose 1-phosphate degradation; D-glyceraldehyde 3-phosphate and acetaldehyde from 2-deoxy-alpha-D-ribose 1-phosphate: step 1/2. Its function is as follows. Isomerase that catalyzes the conversion of deoxy-ribose 1-phosphate (dRib-1-P) and ribose 1-phosphate (Rib-1-P) to deoxy-ribose 5-phosphate (dRib-5-P) and ribose 5-phosphate (Rib-5-P), respectively. The polypeptide is Phosphopentomutase (Bacillus cereus (strain B4264)).